The sequence spans 434 residues: 23S rRNA (uracil(1939)-C(5))-methyltransferase RlmD (434 aa).

The region spanning 10 to 68 is the TRAM domain; the sequence is RVTTRQIITVTVNDLDPFGQGVARHQGKALFVSGVLPHEQAEVVLVEDKKQYARAEVKR. Positions 81, 87, 90, and 162 each coordinate [4Fe-4S] cluster. Residues Gln-265, Phe-294, Asn-299, Glu-315, Asn-342, and Asp-363 each contribute to the S-adenosyl-L-methionine site. The active-site Nucleophile is the Cys-389.

It belongs to the class I-like SAM-binding methyltransferase superfamily. RNA M5U methyltransferase family. RlmD subfamily.

It catalyses the reaction uridine(1939) in 23S rRNA + S-adenosyl-L-methionine = 5-methyluridine(1939) in 23S rRNA + S-adenosyl-L-homocysteine + H(+). Catalyzes the formation of 5-methyl-uridine at position 1939 (m5U1939) in 23S rRNA. The chain is 23S rRNA (uracil(1939)-C(5))-methyltransferase RlmD from Klebsiella pneumoniae subsp. pneumoniae (strain ATCC 700721 / MGH 78578).